Here is a 361-residue protein sequence, read N- to C-terminus: P2Y purinoceptor 4 (361 aa).

A disordered region spans residues 1 to 20 (MTSAESLLFTSLGPSPSSGD). The Extracellular segment spans residues 1–30 (MTSAESLLFTSLGPSPSSGDGDCRFNEEFK). A helical transmembrane segment spans residues 31 to 58 (FILLPMSYAVVFVLGLALNAPTLWLFLF). Residues 59–68 (RLRPWDATAT) are Cytoplasmic-facing. The helical transmembrane segment at 69–91 (YMFHLALSDTLYVLSLPTLVYYY) threads the bilayer. At 92–108 (AARNHWPFGTGLCKFVR) the chain is on the extracellular side. A disulfide bond links cysteine 104 and cysteine 181. Residues 109 to 127 (FLFYWNLYCSVLFLTCISV) form a helical membrane-spanning segment. The Cytoplasmic portion of the chain corresponds to 128–149 (HRYLGICHPLRAIRWGRPRFAS). A helical membrane pass occupies residues 150–170 (LLCLGVWLVVAGCLVPNLFFV). Residues 171-192 (TTNANGTTILCHDTTLPEEFDH) lie on the Extracellular side of the membrane. Residue asparagine 175 is glycosylated (N-linked (GlcNAc...) asparagine). A helical membrane pass occupies residues 193-218 (YVYFSSAVMVLLFGLPFLITLVCYGL). Residues 219 to 242 (MARRLYRPLPGAGQSSSRLRSLRT) are Cytoplasmic-facing. A helical membrane pass occupies residues 243–265 (IAVVLTVFAVCFVPFHITRTIYY). The Extracellular portion of the chain corresponds to 266-283 (QARLLQADCHVLNIVNVV). The chain crosses the membrane as a helical span at residues 284-305 (YKVTRPLASANSCLDPVLYLFT). The Cytoplasmic portion of the chain corresponds to 306-361 (GDKYRNQLQQLCRGSKPKPRTAASSLALVTLHEESISRWADTHQDSTFSAYEGDRL).

It belongs to the G-protein coupled receptor 1 family. Post-translationally, phosphorylation of Ser-329 and Ser-330 is a key step in agonist-dependent desensitization and loss of surface P2RY4. This phosphorylation does not involve PKC, nor other calcium-activated kinases. Widely expressed at low levels. In brain, higher expression in the pineal gland and ventricular system.

Its subcellular location is the cell membrane. Its function is as follows. Receptor for ATP and UTP coupled to G-proteins that activate a phosphatidylinositol-calcium second messenger system. Not activated by ADP or UDP. The chain is P2Y purinoceptor 4 (P2ry4) from Rattus norvegicus (Rat).